The following is a 277-amino-acid chain: Caspase-3 (277 aa).

Position 1 is an N-acetylmethionine (Met-1). Propeptides lie at residues 1–9 (MENNKTSVD) and 10–28 (SKSI…KSVD). Lys-11 bears the N6-acetyllysine mark. Position 26 is a phosphoserine (Ser-26). Active-site residues include His-121 and Cys-163. An S-nitrosocysteine; in inhibited form modification is found at Cys-163.

This sequence belongs to the peptidase C14A family. As to quaternary structure, heterotetramer that consists of two anti-parallel arranged heterodimers, each one formed by a 17 kDa (p17) and a 12 kDa (p12) subunit. Interacts with BIRC6/bruce. Post-translationally, cleavage by granzyme B, caspase-6, caspase-8 and caspase-10 generates the two active subunits. Additional processing of the propeptides is likely due to the autocatalytic activity of the activated protease. Active heterodimers between the small subunit of caspase-7 protease and the large subunit of caspase-3 also occur and vice versa. In terms of processing, S-nitrosylated on its catalytic site cysteine in unstimulated cell lines and denitrosylated upon activation of the Fas apoptotic pathway, associated with an increase in intracellular caspase activity. Fas therefore activates caspase-3 not only by inducing the cleavage of the caspase zymogen to its active subunits, but also by stimulating the denitrosylation of its active site thiol. Ubiquitinated by BIRC6; this activity is inhibited by DIABLO/SMAC. As to expression, highest expression in spleen, lung, liver, kidney and heart. Lower expression in brain, skeletal muscle and testis.

It is found in the cytoplasm. The enzyme catalyses Strict requirement for an Asp residue at positions P1 and P4. It has a preferred cleavage sequence of Asp-Xaa-Xaa-Asp-|- with a hydrophobic amino-acid residue at P2 and a hydrophilic amino-acid residue at P3, although Val or Ala are also accepted at this position.. With respect to regulation, inhibited by BIRC6; following inhibition of BIRC6-caspase binding by DIABLO/SMAC, BIRC6 is subjected to caspase cleavage, leading to an increase in active caspases. In terms of biological role, thiol protease that acts as a major effector caspase involved in the execution phase of apoptosis. Following cleavage and activation by initiator caspases (CASP8, CASP9 and/or CASP10), mediates execution of apoptosis by catalyzing cleavage of many proteins. At the onset of apoptosis, it proteolytically cleaves poly(ADP-ribose) polymerase PARP1 at a '216-Asp-|-Gly-217' bond. Cleaves and activates sterol regulatory element binding proteins (SREBPs) between the basic helix-loop-helix leucine zipper domain and the membrane attachment domain. Cleaves and activates caspase-6, -7 and -9 (CASP6, CASP7 and CASP9, respectively). Cleaves and inactivates interleukin-18 (IL18). Triggers cell adhesion in sympathetic neurons through RET cleavage. Cleaves IL-1 beta between an Asp and an Ala, releasing the mature cytokine which is involved in a variety of inflammatory processes. Cleaves and inhibits serine/threonine-protein kinase AKT1 in response to oxidative stress. Acts as an inhibitor of type I interferon production during virus-induced apoptosis by mediating cleavage of antiviral proteins CGAS, IRF3 and MAVS, thereby preventing cytokine overproduction. Also involved in pyroptosis by mediating cleavage and activation of gasdermin-E (GSDME). Cleaves XRCC4 and phospholipid scramblase proteins XKR4, XKR8 and XKR9, leading to promote phosphatidylserine exposure on apoptotic cell surface. Cleaves BIRC6 following inhibition of BIRC6-caspase binding by DIABLO/SMAC. The polypeptide is Caspase-3 (Casp3) (Mus musculus (Mouse)).